Consider the following 272-residue polypeptide: Small ribosomal subunit biogenesis GTPase RsgA (272 aa).

The 152-residue stretch at 56 to 207 (KNILIRPKVA…IIDTPGFSSI (152 aa)) folds into the CP-type G domain. Residues 105–108 (TKAD) and 151–159 (GQSGVGKTT) contribute to the GTP site. Zn(2+)-binding residues include Cys-230, Cys-235, His-237, and Cys-245.

Belongs to the TRAFAC class YlqF/YawG GTPase family. RsgA subfamily. In terms of assembly, monomer. Associates with 30S ribosomal subunit, binds 16S rRNA. It depends on Zn(2+) as a cofactor.

Its subcellular location is the cytoplasm. Functionally, one of several proteins that assist in the late maturation steps of the functional core of the 30S ribosomal subunit. Helps release RbfA from mature subunits. May play a role in the assembly of ribosomal proteins into the subunit. Circularly permuted GTPase that catalyzes slow GTP hydrolysis, GTPase activity is stimulated by the 30S ribosomal subunit. The protein is Small ribosomal subunit biogenesis GTPase RsgA of Mycoplasmopsis pulmonis (strain UAB CTIP) (Mycoplasma pulmonis).